The primary structure comprises 470 residues: MATFMTEDFLLKNDIARTLYHKYAAPMPIYDFHCHLSPQEIADDRRFDNLGQIWLEGDHYKWRALRSAGVDESLITGKETSDYEKYMAWANTVPKTLGNPLYHWTHLELRRPFGITGTLFGPDTAESIWTQCNEKLATPAFSARGIMQQMNVRMVGTTDDPIDSLEYHHQIAADDSIDIEVAPSWRPDKVFKIELDGFVDYLGKLEAAADVSITRFDDLRQALTRRLDHFAACGCRASDHGIETLRFAPVPDDAQLDAILGKRLAGETLSELEIAQFTTAVLVWLGRQYAARGWVMQLHIGAIRNNNTRMFRLLGPDTGFDSIGDNNISWALSRLLDSMDVTNELPKTILYCLNPRDNEVLATMIGNFQGPGIAGKVQFGSGWWFNDQKDGMLRQLEQLSQMGLLSQFVGMLTDSRSFLSYTRHEYFRRILCNLLGQWAQDGEIPDDEAMLSRMVQDICFNNAQRYFTIK.

The protein belongs to the metallo-dependent hydrolases superfamily. Uronate isomerase family.

The enzyme catalyses D-glucuronate = D-fructuronate. It catalyses the reaction aldehydo-D-galacturonate = keto-D-tagaturonate. It functions in the pathway carbohydrate metabolism; pentose and glucuronate interconversion. The polypeptide is Uronate isomerase (Salmonella typhi).